Reading from the N-terminus, the 478-residue chain is Shikimate biosynthesis protein AroDE (478 aa).

Residues 1-208 (MLCTIIRGPS…LNHHYFYNFT (208 aa)) are 3-dehydroquinate dehydratase. Residues Ser-21, 29–31 (EMR), and 55–57 (TWK) each bind 3-dehydroquinate. The active-site Proton donor/acceptor; for 3-dehydroquinate dehydratase activity is the His-110. Lys-133 functions as the Schiff-base intermediate with substrate; for 3-dehydroquinate dehydratase activity in the catalytic mechanism. Arg-171 and Gln-196 together coordinate 3-dehydroquinate. A shikimate 5-dehydrogenase region spans residues 209–478 (NLSPQSQICA…VLASLFSIAA (270 aa)). 226 to 228 (SIG) contributes to the shikimate binding site. The active-site Proton acceptor; for shikimate dehydrogenase activity is the Lys-277. Shikimate is bound by residues Asn-298 and Asp-313. NADP(+) is bound by residues 337 to 341 (GAGGA), 360 to 362 (NRT), and Gly-435. Gln-442 is a binding site for shikimate.

This sequence in the N-terminal section; belongs to the type-I 3-dehydroquinase family. It in the C-terminal section; belongs to the shikimate dehydrogenase family.

The catalysed reaction is 3-dehydroquinate = 3-dehydroshikimate + H2O. The enzyme catalyses shikimate + NADP(+) = 3-dehydroshikimate + NADPH + H(+). Its pathway is metabolic intermediate biosynthesis; chorismate biosynthesis; chorismate from D-erythrose 4-phosphate and phosphoenolpyruvate: step 3/7. It functions in the pathway metabolic intermediate biosynthesis; chorismate biosynthesis; chorismate from D-erythrose 4-phosphate and phosphoenolpyruvate: step 4/7. Functionally, bifunctional enzyme that catalyzes two sequential steps of the aromatic amino acids biosynthetic pathway. In the first reaction, the AroD domain catalyzes the cis-dehydration of 3-dehydroquinate (DHQ) and introduces the first double bond of the aromatic ring to yield 3-dehydroshikimate; in the second reaction, the AroE domain catalyzes the reversible NADPH linked reduction of 3-dehydroshikimate (DHSA) to yield shikimate (SA). The protein is Shikimate biosynthesis protein AroDE of Chlamydia muridarum (strain MoPn / Nigg).